Consider the following 100-residue polypeptide: Urease subunit gamma (100 aa).

The protein belongs to the urease gamma subunit family. As to quaternary structure, heterotrimer of UreA (gamma), UreB (beta) and UreC (alpha) subunits. Three heterotrimers associate to form the active enzyme.

The protein resides in the cytoplasm. The catalysed reaction is urea + 2 H2O + H(+) = hydrogencarbonate + 2 NH4(+). Its pathway is nitrogen metabolism; urea degradation; CO(2) and NH(3) from urea (urease route): step 1/1. The polypeptide is Urease subunit gamma (Rhizobium leguminosarum bv. viciae).